The sequence spans 997 residues: MAAIMIGSISVPIIGSAQCATAPIGNRVNIVAPGHMAICKPQMRSHAYYKHASQKLSEQSSRGIEVLNSFFNNDPEDAFRLTRNGMSKVKKGPNGRIILRKPKARHVFERINLEKSEKEQKGKFFNGEYDTTVTSIKGVTTSKENDLGAFSLRSPFYKRTCKKEKRRITRENIVCVDDVNNLCERILKITRDKNIPVEIIGKRRNHHTLTFKKFKGSFVGKVSLAPERSQMKHVEMSYGQFDYILQAICRITSTKHVRDEDIKPGCSGWVFSTDHALTQKYSRLPYLVIRGRDDDGIVNALEPVLFYSDVEHYSFQNEVQFFNGWRKMFDKLKPHSDHTCKVDHNNEECGEMAAVLSQAIFPVLKLSCQVCREKLSRVSFEEFKDFLSRNFMTHESEWSTLRDGVHCDNVLKLIKGAVQTTQNLKLSSDIMKLVQNHTSTHMKQIQDINKALMKGSLVTQDELDLALKQLLEMTQWFKNHMHLTGEEALKTFRNKRSNKAMINPSLLCDNQLDKNGNFIWGERGYHSKRLFKNFFEEVIPSEGYTKYIVRNFPNGTRKLAIGSLIVPLNLDRARTALLGESIEKEPLTSACISQQNENYIHSCCCVTMDDGTPMYSELKSPTKRHLVIGASGDPKYIDLPASEAERMYIAKEGYCYLNIFLAMLVNVNENEAKDFTKMIRDVLIPMLGQWPSLMDVATAAYILGVFHPETRCAELPRILVDHATQTMHVIDSYGSLTVGYHVLKAGTVNHLIQFASNDLQSEMKHYRVGGTPTQRIRLEEQLIKGIFKPKIMMQLLHDDPYILLLGMISPTILVHMYRMRHFERGIEIWIKRDHEIGKIFVILEQLTRKVALAEILVDQLDLISEASPHLLEIMNGCQDNQRAYAPALDLLTIQVEREFSNKELKTNGYPDLHQTLHDMREKNVCEAVTQFMARAKLAGKILCNRAIEAILDFYGKKFDPASKRKKARIFATICSRVLYHDPSTCEEHSRCRRAQTK.

In terms of domain architecture, Peptidase S30 spans 173–313 (IVCVDDVNNL…VLFYSDVEHY (141 aa)). Residues E235 and S267 each act as for P1 proteinase activity in the active site. The Involved in interaction with stylet and aphid transmission signature appears at 365-368 (KLSC). Residues 621 to 623 (PTK) carry the Involved in virions binding and aphid transmission motif. One can recognise a Peptidase C6 domain in the interval 647–769 (MYIAKEGYCY…QSEMKHYRVG (123 aa)). Active-site for helper component proteinase activity residues include C655 and H728.

The protein belongs to the potyviridae P3N-PIPO polyprotein family. Interacts (via PIPO domain) with host PCaP1 protein; this interaction may help to anchor the movement complex to the plasma membrane from which the complex could move to the plasmodesmata. Post-translationally, potyviral RNA is expressed as two polyproteins which undergo post-translational proteolytic processing. Genome polyprotein is processed by NIa-pro, P1 and HC-pro proteinases resulting in the production of at least ten individual proteins. P3N-PIPO is cleaved by P1 and HC-pro proteinases resulting in the production of three individual proteins. The P1 proteinase and the HC-pro cleave only their respective C-termini autocatalytically.

It is found in the host cell junction. Its subcellular location is the host plasmodesma. The catalysed reaction is Hydrolyzes a Gly-|-Gly bond at its own C-terminus, commonly in the sequence -Tyr-Xaa-Val-Gly-|-Gly, in the processing of the potyviral polyprotein.. In terms of biological role, required for aphid transmission and also has proteolytic activity. Only cleaves a Gly-Gly dipeptide at its own C-terminus. Interacts with virions and aphid stylets. Acts as a suppressor of RNA-mediated gene silencing, also known as post-transcriptional gene silencing (PTGS), a mechanism of plant viral defense that limits the accumulation of viral RNAs. May have RNA-binding activity. Allows efficient cell to cell propagation, by bypassing the host cell wall barrier. Transports viral genome to neighboring plant cells directly through plasmosdesmata, without any budding. This Citrullus lanatus (Watermelon) protein is P3N-PIPO polyprotein.